The sequence spans 140 residues: Nucleoside diphosphate kinase (140 aa).

ATP contacts are provided by Lys11, Phe59, Arg87, Thr93, Arg104, and Asn114. His117 acts as the Pros-phosphohistidine intermediate in catalysis.

This sequence belongs to the NDK family. In terms of assembly, homotetramer. Requires Mg(2+) as cofactor.

Its subcellular location is the cytoplasm. The enzyme catalyses a 2'-deoxyribonucleoside 5'-diphosphate + ATP = a 2'-deoxyribonucleoside 5'-triphosphate + ADP. The catalysed reaction is a ribonucleoside 5'-diphosphate + ATP = a ribonucleoside 5'-triphosphate + ADP. In terms of biological role, major role in the synthesis of nucleoside triphosphates other than ATP. The ATP gamma phosphate is transferred to the NDP beta phosphate via a ping-pong mechanism, using a phosphorylated active-site intermediate. The chain is Nucleoside diphosphate kinase from Xanthobacter autotrophicus (strain ATCC BAA-1158 / Py2).